A 62-amino-acid chain; its full sequence is Cytochrome b-c1 complex subunit 6-2, mitochondrial (62 aa).

Intrachain disulfides connect Cys-17/Cys-59 and Cys-31/Cys-45.

This sequence belongs to the UQCRH/QCR6 family. Component of the ubiquinol-cytochrome c oxidoreductase (cytochrome b-c1 complex, complex III, CIII), a multisubunit enzyme composed of 10 subunits. The complex is composed of 3 respiratory subunits cytochrome b (MT-CYB), cytochrome c1 (CYC1-1 or CYC1-2) and Rieske protein (UCR1-1 or UCR1-2), 2 core protein subunits MPPalpha1 (or MPPalpha2) and MPPB, and 5 low-molecular weight protein subunits QCR7-1 (or QCR7-2), UCRQ-1 (or UCRQ-2), QCR9, UCRY and probably QCR6-1 (or QCR6-2). The complex exists as an obligatory dimer and forms supercomplexes (SCs) in the inner mitochondrial membrane with NADH-ubiquinone oxidoreductase (complex I, CI), resulting in different assemblies (supercomplexes SCI(1)III(2) and SCI(2)III(4)).

It localises to the mitochondrion inner membrane. In terms of biological role, component of the ubiquinol-cytochrome c oxidoreductase, a multisubunit transmembrane complex that is part of the mitochondrial electron transport chain which drives oxidative phosphorylation. The respiratory chain contains 3 multisubunit complexes succinate dehydrogenase (complex II, CII), ubiquinol-cytochrome c oxidoreductase (cytochrome b-c1 complex, complex III, CIII) and cytochrome c oxidase (complex IV, CIV), that cooperate to transfer electrons derived from NADH and succinate to molecular oxygen, creating an electrochemical gradient over the inner membrane that drives transmembrane transport and the ATP synthase. The cytochrome b-c1 complex catalyzes electron transfer from ubiquinol to cytochrome c, linking this redox reaction to translocation of protons across the mitochondrial inner membrane, with protons being carried across the membrane as hydrogens on the quinol. In the process called Q cycle, 2 protons are consumed from the matrix, 4 protons are released into the intermembrane space and 2 electrons are passed to cytochrome c. The polypeptide is Cytochrome b-c1 complex subunit 6-2, mitochondrial (QCR6-2) (Arabidopsis thaliana (Mouse-ear cress)).